We begin with the raw amino-acid sequence, 59 residues long: UPF0434 protein VC_1876 (59 aa).

This sequence belongs to the UPF0434 family.

This Vibrio cholerae serotype O1 (strain ATCC 39315 / El Tor Inaba N16961) protein is UPF0434 protein VC_1876.